Here is a 244-residue protein sequence, read N- to C-terminus: tRNA pseudouridine synthase A (244 aa).

The Nucleophile role is filled by Asp55. Position 113 (Tyr113) interacts with substrate.

This sequence belongs to the tRNA pseudouridine synthase TruA family. As to quaternary structure, homodimer.

It catalyses the reaction uridine(38/39/40) in tRNA = pseudouridine(38/39/40) in tRNA. In terms of biological role, formation of pseudouridine at positions 38, 39 and 40 in the anticodon stem and loop of transfer RNAs. The chain is tRNA pseudouridine synthase A from Phytoplasma mali (strain AT).